The sequence spans 381 residues: Short-chain dehydrogenase anuD (381 aa).

6 residues coordinate NADP(+): Ile84, Lys109, Asp133, Asn158, Tyr244, and Lys248. The active-site Proton acceptor is Tyr244. Residue Tyr244 is the Proton donor of the active site. Catalysis depends on Lys248, which acts as the Lowers pKa of active site Tyr.

This sequence belongs to the short-chain dehydrogenases/reductases (SDR) family.

In terms of biological role, highly reducing polyketide synthase; part of the gene cluster that mediates the biosynthesis of annullatin D, an alkylated aromatic polyketide with a fused dihydrobenzofuran lactone ring system that exhibits potent agonistic activities toward the cannabinoid receptors. AnuD does not seem to play a role within the pathway. The annullatin backbone 2-hydroxymethyl-3-pentylphenol is assembled from one acetyl-CoA starter unit and 5 malonyl-CoA elongation units by cooperation of the highly reducing polyketide synthase anuA, the short-chain dehydrogenase anuB and the oxidoreductase anuC, before being hydroxylated at the C-5 alkyl chain by the cytochrome P450 monooxygenase anuE to form (8S)-annullatin E. The prenyltransferase anuH subsequently installs one isoprenyl group at the benzene ring to form (8S)-annullatin J. Enzymatic or nonenzymatic dihydro-benzofuran ring formation between the prenyl and the phenolic hydroxyl groups in (8S)-annullatin J results in two diastereomers (2S,9S)-annullatin H and compound 12. The intermediate (2S,9S)-annullatin H is then converted to (2S,9S)-annullatin D by the FAD-linked oxidoreductase anuG-catalyzed five-member lactone ring formation. The isomer 12 acts as a substrate for the short-chain dehydrogenase anuF and is oxidized to (2R)-annullatin F, which is subsequently acetylated by an acetyltransferase leading to (2R)-annullatin G formation. The remaining enzymes identified within the cluster, anuD, anuI and anuJ, seem not to be involved in annullatin biosynthesis. The sequence is that of Short-chain dehydrogenase anuD from Penicillium roqueforti (strain FM164).